Reading from the N-terminus, the 530-residue chain is Arginine--tRNA ligase (530 aa).

The short motif at 113–123 is the 'HIGH' region element; sequence ANPTGPLHIGH.

The protein belongs to the class-I aminoacyl-tRNA synthetase family. As to quaternary structure, monomer.

The protein resides in the cytoplasm. The catalysed reaction is tRNA(Arg) + L-arginine + ATP = L-arginyl-tRNA(Arg) + AMP + diphosphate. This Campylobacter jejuni subsp. jejuni serotype O:2 (strain ATCC 700819 / NCTC 11168) protein is Arginine--tRNA ligase.